The following is a 185-amino-acid chain: Elongation factor P (185 aa).

This sequence belongs to the elongation factor P family.

It localises to the cytoplasm. It functions in the pathway protein biosynthesis; polypeptide chain elongation. Involved in peptide bond synthesis. Stimulates efficient translation and peptide-bond synthesis on native or reconstituted 70S ribosomes in vitro. Probably functions indirectly by altering the affinity of the ribosome for aminoacyl-tRNA, thus increasing their reactivity as acceptors for peptidyl transferase. This chain is Elongation factor P, found in Burkholderia vietnamiensis (strain G4 / LMG 22486) (Burkholderia cepacia (strain R1808)).